Here is a 503-residue protein sequence, read N- to C-terminus: ATP synthase subunit alpha (503 aa).

An ATP-binding site is contributed by Gly-170–Thr-177.

The protein belongs to the ATPase alpha/beta chains family. F-type ATPases have 2 components, CF(1) - the catalytic core - and CF(0) - the membrane proton channel. CF(1) has five subunits: alpha(3), beta(3), gamma(1), delta(1), epsilon(1). CF(0) has four main subunits: a(1), b(1), b'(1) and c(9-12).

The protein localises to the cellular thylakoid membrane. The catalysed reaction is ATP + H2O + 4 H(+)(in) = ADP + phosphate + 5 H(+)(out). Its function is as follows. Produces ATP from ADP in the presence of a proton gradient across the membrane. The alpha chain is a regulatory subunit. The polypeptide is ATP synthase subunit alpha (Synechocystis sp. (strain ATCC 27184 / PCC 6803 / Kazusa)).